The primary structure comprises 133 residues: Large ribosomal subunit protein uL15 (133 aa).

The disordered stretch occupies residues 1-64; the sequence is MGLENLKPAK…QPLQRRLPKI (64 aa).

This sequence belongs to the universal ribosomal protein uL15 family. In terms of assembly, part of the 50S ribosomal subunit.

Functionally, binds to the 23S rRNA. The sequence is that of Large ribosomal subunit protein uL15 from Helicobacter pylori (strain G27).